Here is a 261-residue protein sequence, read N- to C-terminus: Syntaxin-7 (261 aa).

At Ser-2 the chain carries N-acetylserine. At 2–238 the chain is on the cytoplasmic side; it reads SYTPGVGGDP…DYQRKSRKTL (237 aa). A Phosphothreonine modification is found at Thr-4. Ser-45 bears the Phosphoserine mark. Residues 47-69 adopt a coiled-coil conformation; sequence ELRQQLQQKQQYTNQLTKETDKY. At Ser-75 the chain carries Phosphoserine. Position 79 is a phosphothreonine (Thr-79). A phosphoserine mark is found at Ser-125, Ser-126, Ser-129, and Ser-205. Residues 129–148 are disordered; it reads SGSFPEDSSKERNLVSWESQ. Residues 165 to 227 enclose the t-SNARE coiled-coil homology domain; sequence LRLIHERESS…QQANQQLSRA (63 aa). The helical; Anchor for type IV membrane protein transmembrane segment at 239–259 threads the bilayer; it reads CIIILILVIGVVIIGLIIWGL. The Vesicular portion of the chain corresponds to 260-261; that stretch reads NR.

The protein belongs to the syntaxin family. In terms of assembly, forms a SNARE complex with VTI1B, STX8 and VAMP8 which functions in the homotypic fusion of late endosomes. Component of the SNARE complex composed of STX7, STX8, VAMP7 and VTI1B that is required for heterotypic fusion of late endosomes with lysosomes. Interacts with VPS11, VPS16 and VPS18. Interacts with VPS33A. Interacts with TPC1.

It localises to the early endosome membrane. May be involved in protein trafficking from the plasma membrane to the early endosome (EE) as well as in homotypic fusion of endocytic organelles. Mediates the endocytic trafficking from early endosomes to late endosomes and lysosomes. The protein is Syntaxin-7 (STX7) of Pongo abelii (Sumatran orangutan).